The primary structure comprises 76 residues: ATP synthase subunit c (76 aa).

Helical transmembrane passes span 13-33 and 55-75; these read LNVV…GILI and FLGL…AFIF.

This sequence belongs to the ATPase C chain family. As to quaternary structure, F-type ATPases have 2 components, F(1) - the catalytic core - and F(0) - the membrane proton channel. F(1) has five subunits: alpha(3), beta(3), gamma(1), delta(1), epsilon(1). F(0) has three main subunits: a(1), b(2) and c(10-14). The alpha and beta chains form an alternating ring which encloses part of the gamma chain. F(1) is attached to F(0) by a central stalk formed by the gamma and epsilon chains, while a peripheral stalk is formed by the delta and b chains.

The protein localises to the cell membrane. F(1)F(0) ATP synthase produces ATP from ADP in the presence of a proton or sodium gradient. F-type ATPases consist of two structural domains, F(1) containing the extramembraneous catalytic core and F(0) containing the membrane proton channel, linked together by a central stalk and a peripheral stalk. During catalysis, ATP synthesis in the catalytic domain of F(1) is coupled via a rotary mechanism of the central stalk subunits to proton translocation. Functionally, key component of the F(0) channel; it plays a direct role in translocation across the membrane. A homomeric c-ring of between 10-14 subunits forms the central stalk rotor element with the F(1) delta and epsilon subunits. In Bifidobacterium animalis subsp. lactis (strain AD011), this protein is ATP synthase subunit c.